The following is a 447-amino-acid chain: Blue-light photoreceptor PHR2 (447 aa).

Polar residues predominate over residues 1 to 14 (MDSSNVEENLNPET). The tract at residues 1 to 20 (MDSSNVEENLNPETKSAEEQ) is disordered. A Photolyase/cryptochrome alpha/beta domain is found at 115–249 (RAAVVWFRND…EVKYFWGSTL (135 aa)).

Belongs to the DNA photolyase class-1 family. FAD is required as a cofactor.

This chain is Blue-light photoreceptor PHR2 (PHR2), found in Arabidopsis thaliana (Mouse-ear cress).